A 607-amino-acid chain; its full sequence is MSALLSADDLNDFISPGVACIKPLASSSTNTTTTNTTDSYNENGEVEIQIDSQGNPLEISKIDDKQFQTNKLTPAQISLADCLACSGCITSAEEVLVAQHSHQELIKALQSQKETNKVFVVSISHQSRASLAMAYNVSIENMDKCLIDLFIRQMGFTYIVGTSLGRKLSLINEAKEIINRKTKGSGTGGIDSDSSSGPILSSICPGWVLYAEKTHPYIIPKMSTVKSPQQITGCLLKNLTSNSLNIEKSKIYHLSIMPCFDKKLESARPEVYEEEEEEEEEKDKALVSVPDVDCVITAKELITLLEECPQYQLIPPTLPQEELIGGGCLSMTEIYKQYAPPNWPFIEISWSNDSGSASGGYAYNYLTIYRNDLILKGYDGNKFTINLINGRNPDIYEMRLMYNGENKEKLASAAVVNGFRNIQNLVRKLKPNTGKSTNTTTTTTKSKVNPLAARRRARIANNRGKPETKSTSEVNSQEMEIVADASKVDYVEIMACPNGCINGGGQISAPNTTTTSITLPQKEIEKQWINAVLEKYNSIPMFDLSSQSSSSSSPNEIIKFIEWSKKFENQFNISDNRLFKTHFNPVEKNIIMSVDDPATALLVGSKW.

[4Fe-4S] cluster is bound by residues C20, C82, C85, C88, C204, and C259. The disordered stretch occupies residues K430–S476. A compositionally biased stretch (low complexity) spans N432–K447. [4Fe-4S] cluster is bound by residues C496 and C500.

It belongs to the NARF family.

Component of the cytosolic Fe/S protein assembly machinery. Required for maturation of extramitochondrial Fe/S proteins. May play a role in the transfer of pre-assembled Fe/S clusters to target apoproteins. This chain is Cytosolic Fe-S cluster assembly factor NAR1 (NAR1), found in Candida albicans (strain SC5314 / ATCC MYA-2876) (Yeast).